Consider the following 280-residue polypeptide: 4-diphosphocytidyl-2-C-methyl-D-erythritol kinase (280 aa).

Lysine 11 is an active-site residue. 95-105 (PVGAGLGGGSS) lines the ATP pocket. Aspartate 137 is a catalytic residue.

This sequence belongs to the GHMP kinase family. IspE subfamily.

It catalyses the reaction 4-CDP-2-C-methyl-D-erythritol + ATP = 4-CDP-2-C-methyl-D-erythritol 2-phosphate + ADP + H(+). It functions in the pathway isoprenoid biosynthesis; isopentenyl diphosphate biosynthesis via DXP pathway; isopentenyl diphosphate from 1-deoxy-D-xylulose 5-phosphate: step 3/6. Catalyzes the phosphorylation of the position 2 hydroxy group of 4-diphosphocytidyl-2C-methyl-D-erythritol. The protein is 4-diphosphocytidyl-2-C-methyl-D-erythritol kinase of Geobacter sp. (strain M21).